The sequence spans 517 residues: GMP synthase [glutamine-hydrolyzing] (517 aa).

Residues 9–199 enclose the Glutamine amidotransferase type-1 domain; sequence RILILDFGSQ…VLGVCGCERL (191 aa). C86 acts as the Nucleophile in catalysis. Residues H173 and E175 contribute to the active site. Positions 200–392 constitute a GMPS ATP-PPase domain; that stretch reads WTSESIIEDA…LGLPYNMLYR (193 aa). 227-233 serves as a coordination point for ATP; the sequence is SGGVDSS.

As to quaternary structure, homodimer.

It carries out the reaction XMP + L-glutamine + ATP + H2O = GMP + L-glutamate + AMP + diphosphate + 2 H(+). It functions in the pathway purine metabolism; GMP biosynthesis; GMP from XMP (L-Gln route): step 1/1. In terms of biological role, catalyzes the synthesis of GMP from XMP. This chain is GMP synthase [glutamine-hydrolyzing], found in Vibrio parahaemolyticus serotype O3:K6 (strain RIMD 2210633).